The chain runs to 510 residues: GMP synthase [glutamine-hydrolyzing] (510 aa).

Positions 5–195 (LVLVVDFGGQ…LFNVCNLKGD (191 aa)) constitute a Glutamine amidotransferase type-1 domain. Residue cysteine 82 is the Nucleophile of the active site. Catalysis depends on residues histidine 169 and glutamate 171. The 190-residue stretch at 196 to 385 (WSMSSFAEQQ…LGIPHKLVWR (190 aa)) folds into the GMPS ATP-PPase domain. Residue 223–229 (SGGVDSS) coordinates ATP.

Homodimer.

It carries out the reaction XMP + L-glutamine + ATP + H2O = GMP + L-glutamate + AMP + diphosphate + 2 H(+). Its pathway is purine metabolism; GMP biosynthesis; GMP from XMP (L-Gln route): step 1/1. Functionally, catalyzes the synthesis of GMP from XMP. This Clostridium botulinum (strain Loch Maree / Type A3) protein is GMP synthase [glutamine-hydrolyzing].